Reading from the N-terminus, the 298-residue chain is Probable GTP 3',8-cyclase (298 aa).

The Radical SAM core domain maps to 4–230 (KFGREIRSLR…RKKYIVDGLE (227 aa)). A GTP-binding site is contributed by R13. Residues C20 and C24 each contribute to the [4Fe-4S] cluster site. Y26 contacts S-adenosyl-L-methionine. Position 27 (C27) interacts with [4Fe-4S] cluster. K61 is a binding site for GTP. S-adenosyl-L-methionine is bound at residue G65. GTP is bound at residue T91. An S-adenosyl-L-methionine-binding site is contributed by S115. Residue K152 participates in GTP binding. The [4Fe-4S] cluster site is built by C243 and C246. 248–250 (RIR) contacts GTP. Residue C260 participates in [4Fe-4S] cluster binding.

The protein belongs to the radical SAM superfamily. MoaA family. Requires [4Fe-4S] cluster as cofactor.

It catalyses the reaction GTP + AH2 + S-adenosyl-L-methionine = (8S)-3',8-cyclo-7,8-dihydroguanosine 5'-triphosphate + 5'-deoxyadenosine + L-methionine + A + H(+). It participates in cofactor biosynthesis; molybdopterin biosynthesis. Functionally, catalyzes the cyclization of GTP to (8S)-3',8-cyclo-7,8-dihydroguanosine 5'-triphosphate. In Methanocaldococcus jannaschii (strain ATCC 43067 / DSM 2661 / JAL-1 / JCM 10045 / NBRC 100440) (Methanococcus jannaschii), this protein is Probable GTP 3',8-cyclase.